The chain runs to 1396 residues: Probable ATP-dependent RNA helicase spindle-E (1396 aa).

A disordered region spans residues 1-34; the sequence is MDEAAGPSTSRTSNLEDVDDEGASLAEEDEEHTK. The segment covering 16 to 30 has biased composition (acidic residues); sequence EDVDDEGASLAEEDE. Residues 68-234 form the Helicase ATP-binding domain; the sequence is LDKIRSNAVV…FKIPKKSGYL (167 aa). 81–88 contributes to the ATP binding site; it reads GATGCGKT. The DEAH box motif lies at 180-183; sequence DEVH. Residues 292–468 enclose the Helicase C-terminal domain; it reads KGQEFGDSLE…TVVLKAKLLE (177 aa). Residues 885 to 950 enclose the Tudor domain; sequence NFAMGQMVAA…RQLDDSLGQL (66 aa).

It belongs to the DEAD box helicase family. DEAH subfamily.

Its subcellular location is the cytoplasm. The enzyme catalyses ATP + H2O = ADP + phosphate + H(+). Probable ATP-binding RNA helicase which plays a central role during gametogenesis by repressing transposable elements and preventing their mobilization, which is essential for the germline integrity. Acts via the piRNA metabolic process, which mediates the repression of transposable elements during meiosis by forming complexes composed of piRNAs and Piwi proteins and govern the methylation and subsequent repression of transposons. The sequence is that of Probable ATP-dependent RNA helicase spindle-E (spn-E) from Culex quinquefasciatus (Southern house mosquito).